The sequence spans 262 residues: Ribose-5-phosphate isomerase A (262 aa).

Residues 33 to 36 (TGST), 89 to 92 (DGAD), and 102 to 105 (KGGG) contribute to the substrate site. The active-site Proton acceptor is the glutamate 111. Position 129 (lysine 129) interacts with substrate.

The protein belongs to the ribose 5-phosphate isomerase family. Homodimer.

It catalyses the reaction aldehydo-D-ribose 5-phosphate = D-ribulose 5-phosphate. It functions in the pathway carbohydrate degradation; pentose phosphate pathway; D-ribose 5-phosphate from D-ribulose 5-phosphate (non-oxidative stage): step 1/1. Catalyzes the reversible conversion of ribose-5-phosphate to ribulose 5-phosphate. This is Ribose-5-phosphate isomerase A from Cereibacter sphaeroides (strain KD131 / KCTC 12085) (Rhodobacter sphaeroides).